The sequence spans 825 residues: Trimethylamine-N-oxide reductase (825 aa).

Positions 1–40 form a signal peptide, tat-type signal; the sequence is MKKNNVNEQRRDFLKKTSLGVAGSALSGGMVGVVSKSAVA. Ser187 is a binding site for Mo-bis(molybdopterin guanine dinucleotide).

Belongs to the prokaryotic molybdopterin-containing oxidoreductase family. Mo-bis(molybdopterin guanine dinucleotide) serves as cofactor. Predicted to be exported by the Tat system. The position of the signal peptide cleavage has not been experimentally proven.

It localises to the periplasm. The catalysed reaction is trimethylamine + 2 Fe(III)-[cytochrome c] + H2O = trimethylamine N-oxide + 2 Fe(II)-[cytochrome c] + 3 H(+). Reduces trimethylamine-N-oxide (TMAO) into trimethylamine; an anaerobic reaction coupled to energy-yielding reactions. In Haemophilus influenzae (strain ATCC 51907 / DSM 11121 / KW20 / Rd), this protein is Trimethylamine-N-oxide reductase (torZ).